Here is a 491-residue protein sequence, read N- to C-terminus: UDP-N-acetylmuramate--L-alanine ligase (491 aa).

126-132 (GTHGKTT) is a binding site for ATP.

This sequence belongs to the MurCDEF family.

It is found in the cytoplasm. The catalysed reaction is UDP-N-acetyl-alpha-D-muramate + L-alanine + ATP = UDP-N-acetyl-alpha-D-muramoyl-L-alanine + ADP + phosphate + H(+). It functions in the pathway cell wall biogenesis; peptidoglycan biosynthesis. In terms of biological role, cell wall formation. This is UDP-N-acetylmuramate--L-alanine ligase from Klebsiella pneumoniae (strain 342).